The primary structure comprises 161 residues: Fatty acid-binding protein homolog 2 (161 aa).

The signal sequence occupies residues 1 to 19 (MSSKFLILLAFCGATLVAA).

Belongs to the calycin superfamily. Fatty-acid binding protein (FABP) family.

It localises to the secreted. Its function is as follows. May play a role in sequestering potentially toxic fatty acids and their peroxidation products, or it may be involved in the maintenance of the impermeable lipid layer of the eggshell. This is Fatty acid-binding protein homolog 2 (lbp-2) from Caenorhabditis elegans.